The sequence spans 496 residues: Lysine--tRNA ligase (496 aa).

Mg(2+)-binding residues include E407 and E414.

This sequence belongs to the class-II aminoacyl-tRNA synthetase family. In terms of assembly, homodimer. The cofactor is Mg(2+).

The protein resides in the cytoplasm. The catalysed reaction is tRNA(Lys) + L-lysine + ATP = L-lysyl-tRNA(Lys) + AMP + diphosphate. The polypeptide is Lysine--tRNA ligase (Staphylococcus haemolyticus (strain JCSC1435)).